Here is a 356-residue protein sequence, read N- to C-terminus: Protein trichome birefringence-like 41 (356 aa).

The chain crosses the membrane as a helical; Signal-anchor for type II membrane protein span at residues 12–31 (SALVLSLLLLLLLPLLHEAA). The GDS motif motif lies at 107–109 (GDS). A DCXHWCLPGXXDXWN motif motif is present at residues 333-347 (DCSHWCLSGVPDTWN).

This sequence belongs to the PC-esterase family. TBL subfamily.

It is found in the membrane. Functionally, may act as a bridging protein that binds pectin and other cell wall polysaccharides. Probably involved in maintaining esterification of pectins. May be involved in the specific O-acetylation of cell wall polymers. The polypeptide is Protein trichome birefringence-like 41 (TBL41) (Arabidopsis thaliana (Mouse-ear cress)).